A 326-amino-acid chain; its full sequence is Aspartate carbamoyltransferase catalytic subunit (326 aa).

Carbamoyl phosphate contacts are provided by Arg55 and Thr56. Lys83 contributes to the L-aspartate binding site. 3 residues coordinate carbamoyl phosphate: Arg105, His135, and Gln138. Residues Arg176 and Arg230 each contribute to the L-aspartate site. Residues Gly271 and Pro272 each contribute to the carbamoyl phosphate site.

The protein belongs to the aspartate/ornithine carbamoyltransferase superfamily. ATCase family. As to quaternary structure, heterododecamer (2C3:3R2) of six catalytic PyrB chains organized as two trimers (C3), and six regulatory PyrI chains organized as three dimers (R2).

It catalyses the reaction carbamoyl phosphate + L-aspartate = N-carbamoyl-L-aspartate + phosphate + H(+). The protein operates within pyrimidine metabolism; UMP biosynthesis via de novo pathway; (S)-dihydroorotate from bicarbonate: step 2/3. Its function is as follows. Catalyzes the condensation of carbamoyl phosphate and aspartate to form carbamoyl aspartate and inorganic phosphate, the committed step in the de novo pyrimidine nucleotide biosynthesis pathway. The protein is Aspartate carbamoyltransferase catalytic subunit of Streptomyces coelicolor (strain ATCC BAA-471 / A3(2) / M145).